The following is a 195-amino-acid chain: U8 snoRNA-decapping enzyme (195 aa).

The region spanning 18 to 168 (GWRHACHAML…LENTFIGNAR (151 aa)) is the Nudix hydrolase domain. Residues His24, Arg50, and Phe57 each contribute to the substrate site. Residues Gly59, Glu76, Glu80, and His99 each contribute to the Mn(2+) site. Residues 61–82 (FVDLRDGSLEDGLNRELGEELG) carry the Nudix box motif. The substrate site is built by Asn166 and Gln170. Glu173 serves as a coordination point for Mn(2+).

It belongs to the Nudix hydrolase family. NUDT16 subfamily. Homodimer. Mg(2+) is required as a cofactor. It depends on Mn(2+) as a cofactor. Requires Co(2+) as cofactor.

It localises to the nucleus. The protein resides in the nucleolus. The protein localises to the nucleoplasm. It is found in the cytoplasm. The catalysed reaction is a 5'-end (N(7)-methyl 5'-triphosphoguanosine)-ribonucleoside in mRNA + H2O = N(7)-methyl-GDP + a 5'-end phospho-ribonucleoside in mRNA + 2 H(+). It carries out the reaction IDP + H2O = IMP + phosphate + H(+). It catalyses the reaction dIDP + H2O = dIMP + phosphate + H(+). The enzyme catalyses a 5'-end NAD(+)-phospho-ribonucleoside in mRNA + H2O = a 5'-end phospho-ribonucleoside in mRNA + NAD(+) + H(+). The catalysed reaction is a 5'-end FAD-phospho-ribonucleoside in mRNA + H2O = a 5'-end phospho-adenosine-phospho-ribonucleoside in mRNA + FMN + 2 H(+). It carries out the reaction a 5'-end CoA-ribonucleoside in mRNA + H2O = a 5'-end phospho-adenosine-phospho-ribonucleoside in mRNA + (R)-4'-phosphopantetheine + 2 H(+). Its function is as follows. RNA-binding and decapping enzyme that catalyzes the cleavage of the cap structure of snoRNAs and mRNAs in a metal-dependent manner. Part of the U8 snoRNP complex that is required for the accumulation of mature 5.8S and 28S rRNA. Has diphosphatase activity and removes m7G and/or m227G caps from U8 snoRNA and leaves a 5'monophosphate on the RNA. Also catalyzes the cleavage of the cap structure on mRNAs. Does not hydrolyze cap analog structures like 7-methylguanosine nucleoside triphosphate (m7GpppG). Also hydrolysis m7G- and m227G U3-capped RNAs but with less efficiencies. Has broad substrate specificity with manganese or cobalt as cofactor and can act on various RNA species. Binds to the U8 snoRNA; metal is not required for RNA-binding. May play a role in the regulation of snoRNAs and mRNAs degradation. Also acts as a phosphatase; hydrolyzes the non-canonical purine nucleotides inosine diphosphate (IDP) and deoxyinosine diphosphate (dITP) as well as guanosine diphosphate (GDP), deoxyguanosine diphosphate (dGDP), xanthine diphosphate (XDP), inosine triphosphate (ITP) and deoxyinosine triphosphate (ITP) to their respective monophosphate derivatives and does not distinguish between the deoxy- and ribose forms. The order of activity with different substrates is IDP &gt; dIDP &gt;&gt; GDP = dGDP &gt; XDP = ITP = dITP. Binds strongly to GTP, ITP and XTP. Participates in the hydrolysis of dIDP/IDP and probably excludes non-canonical purines from RNA and DNA precursor pools, thus preventing their incorporation into RNA and DNA and avoiding chromosomal lesions. Exhibits decapping activity towards NAD-capped RNAs and FAD-capped RNAs. Exhibits decapping activity towards dpCoA-capped RNAs in vitro. The sequence is that of U8 snoRNA-decapping enzyme (NUDT16) from Ovis aries (Sheep).